A 1088-amino-acid chain; its full sequence is Tyrocidine synthase 1 (1088 aa).

In terms of domain architecture, Carrier spans 528-602 (PPRTETESIL…QVALFVKSTT (75 aa)). Serine 563 is subject to O-(pantetheine 4'-phosphoryl)serine.

The protein belongs to the ATP-dependent AMP-binding enzyme family. As to quaternary structure, large multienzyme complex of TycA, TycB and TycC. The cofactor is pantetheine 4'-phosphate.

It carries out the reaction L-phenylalanine + ATP + H2O = D-phenylalanine + AMP + diphosphate + H(+). The protein operates within antibiotic biosynthesis; tyrocidine biosynthesis. Its function is as follows. In the first step of peptide synthesis this enzyme activates phenylalanine and racemizes it to the D-isomer. The polypeptide is Tyrocidine synthase 1 (tycA) (Brevibacillus parabrevis).